A 230-amino-acid chain; its full sequence is Poxin (230 aa).

His43 functions as the Proton donor in the catalytic mechanism. The active-site Shared with catalytic histidine of dimeric partner is Tyr174. Residue Lys178 is the Proton acceptor; shared with catalytic histidine of dimeric partner of the active site.

Belongs to the poxin family. In terms of assembly, homodimer.

The catalysed reaction is 2',3'-cGAMP + H2O = Gp(2'-5')Ap(3') + H(+). Functionally, nuclease that cleaves host 2',3'-cGAMP. The sequence is that of Poxin (P26) from Orgyia pseudotsugata multicapsid polyhedrosis virus (OpMNPV).